The sequence spans 381 residues: Heterogeneous nuclear rnp K-like protein 2 (381 aa).

Positions methionine 1–proline 34 are disordered. A compositionally biased stretch (low complexity) spans threonine 15–alanine 33. KH domains are found at residues threonine 43 to isoleucine 107, isoleucine 156 to isoleucine 221, and asparagine 258 to leucine 326. The disordered stretch occupies residues leucine 344 to serine 381. A phosphoserine mark is found at serine 358, serine 360, and serine 362. The segment covering proline 370–serine 381 has biased composition (basic and acidic residues).

It belongs to the HEK2 family. Binds RNA. Post-translationally, phosphorylated by the plasma membrane-Anchored casein kinase YCK1. Phosphorylation at its C-terminus reduces its RNA-binding capacity.

Its subcellular location is the cytoplasm. It is found in the P-body. It localises to the nucleus. The protein resides in the chromosome. The protein localises to the telomere. Its function is as follows. RNA-binding protein involved in the correct localization of transcripts in the cell. RNA localization is a widespread mechanism for achieving localized protein synthesis. Required for the asymmetric localization to the daughter cell nucleus of the ASH1 transcript, coding for a specific repressor of transcription. Overexpression inhibits translation of the ASH1 transcript. Involved in the stability of transcripts, like the MTL1 mRNA. Involved in structural and functional organization of telomeric chromatin and regulates silencing at the HMR locus. The protein is Heterogeneous nuclear rnp K-like protein 2 (HEK2) of Saccharomyces cerevisiae (strain YJM789) (Baker's yeast).